Here is a 368-residue protein sequence, read N- to C-terminus: Quinolinate synthase (368 aa).

Positions 46 and 63 each coordinate iminosuccinate. Residue Cys-110 participates in [4Fe-4S] cluster binding. Iminosuccinate contacts are provided by residues 141–143 (YVN) and Ser-162. [4Fe-4S] cluster is bound at residue Cys-230. Iminosuccinate contacts are provided by residues 256-258 (HPE) and Thr-273. Cys-320 provides a ligand contact to [4Fe-4S] cluster.

It belongs to the quinolinate synthase family. Type 3 subfamily. It depends on [4Fe-4S] cluster as a cofactor.

The protein resides in the cytoplasm. It catalyses the reaction iminosuccinate + dihydroxyacetone phosphate = quinolinate + phosphate + 2 H2O + H(+). The protein operates within cofactor biosynthesis; NAD(+) biosynthesis; quinolinate from iminoaspartate: step 1/1. In terms of biological role, catalyzes the condensation of iminoaspartate with dihydroxyacetone phosphate to form quinolinate. The chain is Quinolinate synthase from Bacillus cereus (strain ATCC 14579 / DSM 31 / CCUG 7414 / JCM 2152 / NBRC 15305 / NCIMB 9373 / NCTC 2599 / NRRL B-3711).